Reading from the N-terminus, the 186-residue chain is Large ribosomal subunit protein uL5 (186 aa).

This sequence belongs to the universal ribosomal protein uL5 family. Part of the 50S ribosomal subunit; part of the 5S rRNA/L5/L18/L25 subcomplex. Contacts the 5S rRNA and the P site tRNA. Forms a bridge to the 30S subunit in the 70S ribosome.

Functionally, this is one of the proteins that bind and probably mediate the attachment of the 5S RNA into the large ribosomal subunit, where it forms part of the central protuberance. In the 70S ribosome it contacts protein S13 of the 30S subunit (bridge B1b), connecting the 2 subunits; this bridge is implicated in subunit movement. Contacts the P site tRNA; the 5S rRNA and some of its associated proteins might help stabilize positioning of ribosome-bound tRNAs. In Cereibacter sphaeroides (strain ATCC 17023 / DSM 158 / JCM 6121 / CCUG 31486 / LMG 2827 / NBRC 12203 / NCIMB 8253 / ATH 2.4.1.) (Rhodobacter sphaeroides), this protein is Large ribosomal subunit protein uL5.